Reading from the N-terminus, the 273-residue chain is tRNA (guanine-N(7)-)-methyltransferase (273 aa).

Positions 1–31 (MSQHPDINTNVDATSLTDDQKSLDTNATSGN) are enriched in polar residues. The disordered stretch occupies residues 1–36 (MSQHPDINTNVDATSLTDDQKSLDTNATSGNEVAPD). Glutamate 105, glutamate 130, aspartate 157, and aspartate 179 together coordinate S-adenosyl-L-methionine. Residue aspartate 179 is part of the active site. Residues lysine 183, aspartate 215, and 252 to 255 (TKFE) contribute to the substrate site.

This sequence belongs to the class I-like SAM-binding methyltransferase superfamily. TrmB family.

It carries out the reaction guanosine(46) in tRNA + S-adenosyl-L-methionine = N(7)-methylguanosine(46) in tRNA + S-adenosyl-L-homocysteine. It participates in tRNA modification; N(7)-methylguanine-tRNA biosynthesis. Functionally, catalyzes the formation of N(7)-methylguanine at position 46 (m7G46) in tRNA. This chain is tRNA (guanine-N(7)-)-methyltransferase, found in Psychrobacter cryohalolentis (strain ATCC BAA-1226 / DSM 17306 / VKM B-2378 / K5).